The primary structure comprises 256 residues: Thiazole synthase (256 aa).

The active-site Schiff-base intermediate with DXP is lysine 95. 1-deoxy-D-xylulose 5-phosphate-binding positions include glycine 156, 182–183 (AG), and 204–205 (NT).

The protein belongs to the ThiG family. In terms of assembly, homotetramer. Forms heterodimers with either ThiH or ThiS.

It localises to the cytoplasm. It carries out the reaction [ThiS sulfur-carrier protein]-C-terminal-Gly-aminoethanethioate + 2-iminoacetate + 1-deoxy-D-xylulose 5-phosphate = [ThiS sulfur-carrier protein]-C-terminal Gly-Gly + 2-[(2R,5Z)-2-carboxy-4-methylthiazol-5(2H)-ylidene]ethyl phosphate + 2 H2O + H(+). It functions in the pathway cofactor biosynthesis; thiamine diphosphate biosynthesis. In terms of biological role, catalyzes the rearrangement of 1-deoxy-D-xylulose 5-phosphate (DXP) to produce the thiazole phosphate moiety of thiamine. Sulfur is provided by the thiocarboxylate moiety of the carrier protein ThiS. In vitro, sulfur can be provided by H(2)S. The chain is Thiazole synthase from Salmonella arizonae (strain ATCC BAA-731 / CDC346-86 / RSK2980).